The sequence spans 97 residues: Small ribosomal subunit protein bS21 (97 aa).

Residues 37–97 (EKPSVRKARE…APASSPTTTA (61 aa)) form a disordered region. A compositionally biased stretch (low complexity) spans 76–97 (RAVAPRRPAAAPAPASSPTTTA).

Belongs to the bacterial ribosomal protein bS21 family.

This Methylobacterium sp. (strain 4-46) protein is Small ribosomal subunit protein bS21.